A 211-amino-acid polypeptide reads, in one-letter code: MSNSPAFGKNKIELPQLDWAYDSLEPYISGKINEIHHKKHHQTYVNGYNSAIEQLIEAESQGDVKKAIVIQQNIKFHGGGHTNHVLFWKSLAPNSQNGGKHPGSDTNLGKKIIEQYGSIDNLISITNAKLASIQGSGWAFIVKNKQNGGNLDVVTTYNQDTVTDPLVPLIAIDAWEHAYYLQYQNVKADYFKAIWNVINWEEASKRFDSHL.

Mn(2+) is bound by residues histidine 36, histidine 84, aspartate 173, and histidine 177.

The protein belongs to the iron/manganese superoxide dismutase family. In terms of assembly, homotetramer. The cofactor is Mn(2+).

Its subcellular location is the mitochondrion matrix. It catalyses the reaction 2 superoxide + 2 H(+) = H2O2 + O2. Its function is as follows. Destroys superoxide anion radicals which are normally produced within the cells and which are toxic to biological systems. The polypeptide is Probable superoxide dismutase [Mn], mitochondrial (Debaryomyces hansenii (strain ATCC 36239 / CBS 767 / BCRC 21394 / JCM 1990 / NBRC 0083 / IGC 2968) (Yeast)).